A 471-amino-acid chain; its full sequence is 5-hydroxytryptamine receptor 2A (471 aa).

Residues 1 to 80 are Extracellular-facing; sequence MEILCEDNIS…LQEKNWSALL (80 aa). Asn-8, Asn-38, Asn-44, Asn-51, and Asn-54 each carry an N-linked (GlcNAc...) asparagine glycan. A helical membrane pass occupies residues 81–97; sequence TTVVIILTIAGNILVIM. Residues 98-111 are Cytoplasmic-facing; it reads AVSLEKKLQNATNY. The helical transmembrane segment at 112 to 137 threads the bilayer; sequence FLMSLAIADMLLGFLVMPVSMLTILY. Topologically, residues 138 to 146 are extracellular; the sequence is GYRWPLPSK. Residues 147–171 form a helical membrane-spanning segment; the sequence is LCAIWIYLDVLFSTASIMHLCAISL. An intrachain disulfide couples Cys-148 to Cys-227. Residue Asp-155 participates in serotonin binding. Positions 172-174 match the DRY motif; important for ligand-induced conformation changes motif; that stretch reads DRY. Residues 172–191 are Cytoplasmic-facing; the sequence is DRYVAIQNPIHHSRFNSRTK. Residues 192 to 215 traverse the membrane as a helical segment; the sequence is AFLKIIAVWTISVGISMPIPVFGL. Topologically, residues 216-232 are extracellular; the sequence is QDDSKVFKEGSCLLADD. The chain crosses the membrane as a helical span at residues 233 to 258; the sequence is NFVLIGSFVAFFIPLTIMVITYFLTI. Residues 259–322 lie on the Cytoplasmic side of the membrane; sequence KSLQKEATLC…QSISNEQKAC (64 aa). The residue at position 280 (Ser-280) is a Phosphoserine. A helical membrane pass occupies residues 323 to 348; that stretch reads KVLGIVFFLFVVMWCPFFITNIMAVI. Asn-343 contacts serotonin. Cys-349 and Cys-353 are disulfide-bonded. The Extracellular segment spans residues 349-356; that stretch reads CKESCNEN. A helical membrane pass occupies residues 357-382; that stretch reads VIGALLNVFVWIGYLSSAVNPLVYTL. The NPxxY motif; important for ligand-induced conformation changes and signaling motif lies at 376 to 380; it reads NPLVY. Topologically, residues 383-471 are cytoplasmic; sequence FNKTYRSAFS…ETVNEKVSCV (89 aa). The PDZ-binding motif lies at 469 to 471; it reads SCV.

This sequence belongs to the G-protein coupled receptor 1 family. As to quaternary structure, interacts (via C-terminus) with MPDZ and PATJ. May interact (via C-terminus) with MPP3, PRDX6, DLG4, DLG1, CASK, APBA1 and MAGI2. Interacts with GRM2 and DRD2; this may affect signaling. As to expression, detected in adult intestine, especially in mucosal epithelium, longitudinal and circular layers of muscularis externa and myenteric plexuses. Highly expressed in Paneth cells, and detected at lower levels in enterocytes (at protein level). Detected in brain cortex.

It is found in the cell membrane. Its subcellular location is the cell projection. The protein resides in the axon. It localises to the cytoplasmic vesicle. The protein localises to the membrane. It is found in the caveola. Its subcellular location is the dendrite. The protein resides in the presynapse. G-protein coupled receptor activity is regulated by lipids: oleamide increases HTR2A-mediated activity. Its function is as follows. G-protein coupled receptor for 5-hydroxytryptamine (serotonin). Also functions as a receptor for various drugs and psychoactive substances, including mescaline, psilocybin, 1-(2,5-dimethoxy-4-iodophenyl)-2-aminopropane (DOI) and lysergic acid diethylamide (LSD). Ligand binding causes a conformation change that triggers signaling via guanine nucleotide-binding proteins (G proteins) and modulates the activity of downstream effectors. HTR2A is coupled to G(q)/G(11) G alpha proteins and activates phospholipase C-beta, releasing diacylglycerol (DAG) and inositol 1,4,5-trisphosphate (IP3) second messengers that modulate the activity of phosphatidylinositol 3-kinase and promote the release of Ca(2+) ions from intracellular stores, respectively. Beta-arrestin family members inhibit signaling via G proteins and mediate activation of alternative signaling pathways. Affects neural activity, perception, cognition and mood. Plays a role in the regulation of behavior, including responses to anxiogenic situations and psychoactive substances. Plays a role in intestinal smooth muscle contraction, and may play a role in arterial vasoconstriction. The chain is 5-hydroxytryptamine receptor 2A (Htr2a) from Rattus norvegicus (Rat).